The following is a 194-amino-acid chain: Cysteine and glycine-rich protein 3 (194 aa).

Positions 1–5 (MPNWG) are interaction with TCAP. The 52-residue stretch at 10–61 (CGACEKTVYHAEEIQCNGRSFHKTCFHCMACRKALDSTTVAAHESEIYCKVC) folds into the LIM zinc-binding 1 domain. Positions 64–69 (RRYGPK) match the Nuclear localization signal motif. The tract at residues 94–105 (QSPKPARAATTS) is interaction with CLF2. Phosphoserine occurs at positions 95, 111, and 153. The 52-residue stretch at 120–171 (CPRCGKSVYAAEKVMGGGKPWHKTCFRCAICGKSLESTNVTDKDGELYCKVC) folds into the LIM zinc-binding 2 domain.

Self-associates. Oligomeric in the cytoplasm and monomeric in the nucleus. Homooligomers preferentially form along the actin cytoskeleton. Interacts with TCAP. Interacts with LDHD, MYOD1, MYOG, ACTN2, NRAP, MYF6. Interacts (via N-terminus)D with GLRX3 (via C-terminus) and PPP3CA; GLRX3 and calcineurin compete for interaction with CSRP3. Interacts with CFL2; the stoichiometry influences F-actin depolymerization and possibly two molecules of CFL2 can interact with one molecule of CSRP3 resulting in the highest functional impact; the interaction is stronger with phosphorylated CFL2. Phosphorylated by PKC/PRKCA.

Its subcellular location is the nucleus. The protein localises to the cytoplasm. It is found in the cytoskeleton. The protein resides in the myofibril. It localises to the sarcomere. Its subcellular location is the z line. Its function is as follows. Positive regulator of myogenesis. Acts as a cofactor for myogenic bHLH transcription factors such as MYOD1, and probably MYOG and MYF6. Enhances the DNA-binding activity of the MYOD1:TCF3 isoform E47 complex and may promote formation of a functional MYOD1:TCF3 isoform E47:MEF2A complex involved in myogenesis. Plays a crucial and specific role in the organization of cytosolic structures in cardiomyocytes. Could play a role in mechanical stretch sensing. May be a scaffold protein that promotes the assembly of interacting proteins at Z-line structures. It is essential for calcineurin anchorage to the Z line. Required for stress-induced calcineurin-NFAT activation. The role in regulation of cytoskeleton dynamics by association with CFL2 is reported conflictingly. Proposed to contribute to the maintenance of muscle cell integrity through an actin-based mechanism. Can directly bind to actin filaments, cross-link actin filaments into bundles without polarity selectivity and protect them from dilution- and cofilin-mediated depolymerization; the function seems to involve its self-association. In vitro can inhibit PKC/PRKCA activity. Proposed to be involved in cardiac stress signaling by down-regulating excessive PKC/PRKCA signaling. The protein is Cysteine and glycine-rich protein 3 (Csrp3) of Mus musculus (Mouse).